A 454-amino-acid chain; its full sequence is Transmembrane protein adipocyte-associated 1 homolog (454 aa).

N-linked (GlcNAc...) asparagine glycans are attached at residues Asn26 and Asn44. 5 helical membrane-spanning segments follow: residues 80–100 (AILIPNLLFLLFLFLKCTSVI), 113–133 (AFTLLVYVSTLVNIIRCVYSM), 151–171 (IIIKFFYLTAEFCALTFGLLF), 180–200 (ILIALLGTLLVSIPHTAVQVI), and 224–244 (FVFWVLSSATLALVYFFIMCL). Asn258 carries N-linked (GlcNAc...) asparagine glycosylation. 2 helical membrane-spanning segments follow: residues 262–282 (FIYCMMMVTLNILQSMGAALI) and 290–310 (LCFVGVSTYVYFVLYPPIIYF). N-linked (GlcNAc...) asparagine glycans are attached at residues Asn322 and Asn323. Residues 408–454 (RTGSDDFAHHRDSMLSEPSTGTTTRHLKGLGPQGSLVFEEDPSSLRL) are disordered. Over residues 410-421 (GSDDFAHHRDSM) the composition is skewed to basic and acidic residues. Residues 445–454 (FEEDPSSLRL) show a composition bias toward acidic residues.

This sequence belongs to the UPF0359 family.

It is found in the membrane. The polypeptide is Transmembrane protein adipocyte-associated 1 homolog (tpra-1) (Caenorhabditis briggsae).